A 405-amino-acid polypeptide reads, in one-letter code: Acetate kinase (405 aa).

Position 7 (Asn7) interacts with Mg(2+). Position 14 (Lys14) interacts with ATP. A substrate-binding site is contributed by Arg98. Asp156 (proton donor/acceptor) is an active-site residue. ATP is bound by residues 215–219 (HLGNG), 290–292 (DLR), and 338–342 (GVGEN). Glu391 contacts Mg(2+).

It belongs to the acetokinase family. In terms of assembly, homodimer. The cofactor is Mg(2+). Requires Mn(2+) as cofactor.

The protein localises to the cytoplasm. The catalysed reaction is acetate + ATP = acetyl phosphate + ADP. It participates in metabolic intermediate biosynthesis; acetyl-CoA biosynthesis; acetyl-CoA from acetate: step 1/2. Its function is as follows. Catalyzes the formation of acetyl phosphate from acetate and ATP. Can also catalyze the reverse reaction. This Gloeobacter violaceus (strain ATCC 29082 / PCC 7421) protein is Acetate kinase.